The primary structure comprises 530 residues: Putative ABC transporter ATP-binding protein SSO1893 (530 aa).

2 ABC transporter domains span residues 6 to 243 (IRDL…LGLE) and 282 to 516 (ILFA…EPPL). ATP contacts are provided by residues 38–45 (GRSGSGKS) and 314–321 (GKNGSGKT).

This sequence belongs to the ABC transporter superfamily.

The protein localises to the cell membrane. Probably part of an ABC transporter complex. Responsible for energy coupling to the transport system. This chain is Putative ABC transporter ATP-binding protein SSO1893, found in Saccharolobus solfataricus (strain ATCC 35092 / DSM 1617 / JCM 11322 / P2) (Sulfolobus solfataricus).